The following is a 433-amino-acid chain: Enolase (433 aa).

Gln-163 provides a ligand contact to (2R)-2-phosphoglycerate. Glu-205 (proton donor) is an active-site residue. The Mg(2+) site is built by Asp-242, Glu-285, and Asp-312. Residues Lys-337, Arg-366, Ser-367, and Lys-388 each contribute to the (2R)-2-phosphoglycerate site. Catalysis depends on Lys-337, which acts as the Proton acceptor.

It belongs to the enolase family. Mg(2+) serves as cofactor.

It localises to the cytoplasm. The protein localises to the secreted. It is found in the cell surface. The enzyme catalyses (2R)-2-phosphoglycerate = phosphoenolpyruvate + H2O. It participates in carbohydrate degradation; glycolysis; pyruvate from D-glyceraldehyde 3-phosphate: step 4/5. In terms of biological role, catalyzes the reversible conversion of 2-phosphoglycerate (2-PG) into phosphoenolpyruvate (PEP). It is essential for the degradation of carbohydrates via glycolysis. The protein is Enolase of Lawsonia intracellularis (strain PHE/MN1-00).